A 614-amino-acid chain; its full sequence is Aspartate--tRNA ligase (614 aa).

Glu-174 contributes to the L-aspartate binding site. The tract at residues 198-201 is aspartate; it reads QLFK. Residue Arg-220 coordinates L-aspartate. Residues 220 to 222 and Gln-229 contribute to the ATP site; that span reads RDE. His-448 serves as a coordination point for L-aspartate. Glu-482 serves as a coordination point for ATP. Arg-489 serves as a coordination point for L-aspartate. 534 to 537 serves as a coordination point for ATP; it reads GLDR.

This sequence belongs to the class-II aminoacyl-tRNA synthetase family. Type 1 subfamily. As to quaternary structure, homodimer.

Its subcellular location is the cytoplasm. The catalysed reaction is tRNA(Asp) + L-aspartate + ATP = L-aspartyl-tRNA(Asp) + AMP + diphosphate. In terms of biological role, catalyzes the attachment of L-aspartate to tRNA(Asp) in a two-step reaction: L-aspartate is first activated by ATP to form Asp-AMP and then transferred to the acceptor end of tRNA(Asp). This is Aspartate--tRNA ligase from Lactobacillus acidophilus (strain ATCC 700396 / NCK56 / N2 / NCFM).